We begin with the raw amino-acid sequence, 142 residues long: Fluoride-specific ion channel FluC 1 (142 aa).

4 helical membrane-spanning segments follow: residues 17 to 37 (AWVS…GLAL), 42 to 62 (GFPF…GFYA), 80 to 100 (FVMT…LETF), and 109 to 129 (YIAL…VWLG). Glycine 87 and threonine 90 together coordinate Na(+).

This sequence belongs to the fluoride channel Fluc/FEX (TC 1.A.43) family.

The protein resides in the cell inner membrane. The catalysed reaction is fluoride(in) = fluoride(out). With respect to regulation, na(+) is not transported, but it plays an essential structural role and its presence is essential for fluoride channel function. In terms of biological role, fluoride-specific ion channel. Important for reducing fluoride concentration in the cell, thus reducing its toxicity. The protein is Fluoride-specific ion channel FluC 1 of Bradyrhizobium diazoefficiens (strain JCM 10833 / BCRC 13528 / IAM 13628 / NBRC 14792 / USDA 110).